The following is a 348-amino-acid chain: Uroporphyrinogen decarboxylase (348 aa).

Residues arginine 27 to arginine 31, phenylalanine 46, aspartate 76, tyrosine 152, serine 207, and histidine 320 each bind substrate.

The protein belongs to the uroporphyrinogen decarboxylase family. Homodimer.

The protein localises to the cytoplasm. It catalyses the reaction uroporphyrinogen III + 4 H(+) = coproporphyrinogen III + 4 CO2. The protein operates within porphyrin-containing compound metabolism; protoporphyrin-IX biosynthesis; coproporphyrinogen-III from 5-aminolevulinate: step 4/4. Functionally, catalyzes the decarboxylation of four acetate groups of uroporphyrinogen-III to yield coproporphyrinogen-III. In Bacillus cereus (strain B4264), this protein is Uroporphyrinogen decarboxylase.